A 548-amino-acid polypeptide reads, in one-letter code: MALHVPKAPGFAQMLKEGAKHYSGLEEAVYRNIQACKELAQTTRTAYGPNGMNKMVINHLEKLFVTNDAATILRELEVQHPAAKMLVMASHMQEQEVGDGTNFVLVFAGVLLELAEDLLRMGLSVSEVIEGYEKACKKALEILPDLVCCSAKNLRDVDEVASLLHTSVMSKQYGNESFLSKLIAQACVSILPDSGHFNVDNIRVCKIVGAGVSASSVLHGMVFNKETEGDVTSVKDAKXAVYSCPFDGMITETKGTVLIKNAEELMNFSKGEENLMDLQVKAIADSGANVVVTGGKVADMALHYANKYNLMIVRLNSKWDLRRLCKTVGATALPRLTPPTLEEMGHCNSVYLSEVGDTQVVVFKHEKEDGAISTILIRGSTDNLMDDIERAVDDGVNTFKVLTRDKRLVPGGGATEIELAKQITSYGETCPGLDQYAIKKFAEAFEAIPRALAENSGVKANEVISKLYAVHQEGNKNVGFDIEAEAAAVKDMLEAGILDTYLGKYWGIKLATNAAVTVLRVDQIIMAKPAGGPKPPSGKKDWDEDQND.

At A2 the chain carries N-acetylalanine. Residues Y47 and G48 each coordinate ADP. A Mg(2+)-binding site is contributed by D99. The ADP site is built by G100, T101, N102, F103, M169, S170, K171, G412, and D499. G100, T101, and N102 together coordinate ATP. ATP-binding residues include S170, K171, G412, D499, and K504. Y505 bears the Phosphotyrosine mark. Residues 529–548 are disordered; that stretch reads PAGGPKPPSGKKDWDEDQND.

Component of the chaperonin-containing T-complex (TRiC), a hexadecamer composed of two identical back-to-back stacked rings enclosing a protein folding chamber. Each ring is made up of eight different subunits: TCP1/CCT1, CCT2, CCT3, CCT4, CCT5, CCT6A/CCT6, CCT7, CCT8.

It localises to the cytoplasm. The protein localises to the cytoskeleton. The protein resides in the microtubule organizing center. Its subcellular location is the centrosome. It is found in the cilium basal body. It catalyses the reaction ATP + H2O = ADP + phosphate + H(+). Component of the chaperonin-containing T-complex (TRiC), a molecular chaperone complex that assists the folding of actin, tubulin and other proteins upon ATP hydrolysis. In Gallus gallus (Chicken), this protein is T-complex protein 1 subunit theta.